A 178-amino-acid chain; its full sequence is Large ribosomal subunit protein uL6 (178 aa).

The protein belongs to the universal ribosomal protein uL6 family. As to quaternary structure, part of the 50S ribosomal subunit.

Functionally, this protein binds to the 23S rRNA, and is important in its secondary structure. It is located near the subunit interface in the base of the L7/L12 stalk, and near the tRNA binding site of the peptidyltransferase center. The sequence is that of Large ribosomal subunit protein uL6 from Staphylococcus saprophyticus subsp. saprophyticus (strain ATCC 15305 / DSM 20229 / NCIMB 8711 / NCTC 7292 / S-41).